We begin with the raw amino-acid sequence, 95 residues long: Protein TusB (95 aa).

The protein belongs to the DsrH/TusB family. As to quaternary structure, heterohexamer, formed by a dimer of trimers. The hexameric TusBCD complex contains 2 copies each of TusB, TusC and TusD. The TusBCD complex interacts with TusE.

The protein resides in the cytoplasm. Functionally, part of a sulfur-relay system required for 2-thiolation of 5-methylaminomethyl-2-thiouridine (mnm(5)s(2)U) at tRNA wobble positions. This chain is Protein TusB, found in Klebsiella pneumoniae subsp. pneumoniae (strain ATCC 700721 / MGH 78578).